A 368-amino-acid chain; its full sequence is GDP-fucose transporter 1 (368 aa).

9 helical membrane passes run Leu-64–Leu-84, Leu-98–Ile-118, Val-141–Tyr-161, Phe-166–Leu-186, Thr-195–Phe-215, Trp-217–Val-237, Leu-251–Gly-271, Phe-287–Met-307, and Ala-332–Ile-352.

It belongs to the TPT transporter family. SLC35C subfamily.

It localises to the golgi apparatus membrane. It catalyses the reaction GMP(out) + GDP-beta-L-fucose(in) = GMP(in) + GDP-beta-L-fucose(out). Antiporter specific for GDP-l-fucose and depending on the concomitant reverse transport of GMP. Involved in GDP-fucose import from the cytoplasm into the Golgi lumen. This Dictyostelium discoideum (Social amoeba) protein is GDP-fucose transporter 1 (slc35c1).